The sequence spans 180 residues: NADH-quinone oxidoreductase subunit I (180 aa).

2 consecutive 4Fe-4S ferredoxin-type domains span residues Leu50–Ala80 and Glu90–Asp119. [4Fe-4S] cluster contacts are provided by Cys60, Cys63, Cys66, Cys70, Cys99, Cys102, Cys105, and Cys109.

Belongs to the complex I 23 kDa subunit family. In terms of assembly, NDH-1 is composed of 13 different subunits. Subunits NuoA, H, J, K, L, M, N constitute the membrane sector of the complex. [4Fe-4S] cluster is required as a cofactor.

It is found in the cell inner membrane. It carries out the reaction a quinone + NADH + 5 H(+)(in) = a quinol + NAD(+) + 4 H(+)(out). Functionally, NDH-1 shuttles electrons from NADH, via FMN and iron-sulfur (Fe-S) centers, to quinones in the respiratory chain. The immediate electron acceptor for the enzyme in this species is believed to be ubiquinone. Couples the redox reaction to proton translocation (for every two electrons transferred, four hydrogen ions are translocated across the cytoplasmic membrane), and thus conserves the redox energy in a proton gradient. The polypeptide is NADH-quinone oxidoreductase subunit I (Yersinia pseudotuberculosis serotype O:1b (strain IP 31758)).